The sequence spans 185 residues: Crossover junction endodeoxyribonuclease RuvC (185 aa).

Catalysis depends on residues aspartate 7, glutamate 66, and aspartate 137. 3 residues coordinate Mg(2+): aspartate 7, glutamate 66, and aspartate 137.

This sequence belongs to the RuvC family. As to quaternary structure, homodimer which binds Holliday junction (HJ) DNA. The HJ becomes 2-fold symmetrical on binding to RuvC with unstacked arms; it has a different conformation from HJ DNA in complex with RuvA. In the full resolvosome a probable DNA-RuvA(4)-RuvB(12)-RuvC(2) complex forms which resolves the HJ. It depends on Mg(2+) as a cofactor.

The protein localises to the cytoplasm. It carries out the reaction Endonucleolytic cleavage at a junction such as a reciprocal single-stranded crossover between two homologous DNA duplexes (Holliday junction).. Its function is as follows. The RuvA-RuvB-RuvC complex processes Holliday junction (HJ) DNA during genetic recombination and DNA repair. Endonuclease that resolves HJ intermediates. Cleaves cruciform DNA by making single-stranded nicks across the HJ at symmetrical positions within the homologous arms, yielding a 5'-phosphate and a 3'-hydroxyl group; requires a central core of homology in the junction. The consensus cleavage sequence is 5'-(A/T)TT(C/G)-3'. Cleavage occurs on the 3'-side of the TT dinucleotide at the point of strand exchange. HJ branch migration catalyzed by RuvA-RuvB allows RuvC to scan DNA until it finds its consensus sequence, where it cleaves and resolves the cruciform DNA. This Anaeromyxobacter dehalogenans (strain 2CP-1 / ATCC BAA-258) protein is Crossover junction endodeoxyribonuclease RuvC.